The primary structure comprises 386 residues: Tumor necrosis factor receptor superfamily member 10D (386 aa).

Disordered regions lie at residues 1-25 and 62-90; these read MGLW…ARTA and DEVP…SHRS. Positions 1–55 are cleaved as a signal peptide; sequence MGLWGQSVPTASSARAGRYPGARTASGTRPWLLDPKILKFVVFIVAVLLPVRVDS. At 56 to 211 the chain is on the extracellular side; the sequence is ATIPRQDEVP…ILGMLASPYH (156 aa). 3 TNFR-Cys repeats span residues 58–97, 98–139, and 140–180; these read IPRQ…GACN, PCTE…DTVC, and QCEK…DIKC. A compositionally biased stretch (polar residues) spans 64-75; sequence VPQQTVAPQQQR. Cystine bridges form between Cys-83–Cys-96, Cys-99–Cys-115, Cys-118–Cys-131, Cys-121–Cys-139, Cys-141–Cys-155, Cys-158–Cys-172, and Cys-162–Cys-180. An N-linked (GlcNAc...) asparagine glycan is attached at Asn-127. N-linked (GlcNAc...) asparagine glycosylation occurs at Asn-182. The helical transmembrane segment at 212 to 232 threads the bilayer; sequence YLIIIVVLVIILAVVVVGFSC. The Cytoplasmic portion of the chain corresponds to 233–386; the sequence is RKKFISYLKG…DEAGSATSCL (154 aa). The Death; truncated domain maps to 340–366; that stretch reads SADISTLLDASATLEEGHAKETIQDQL.

Widely expressed, in particular in fetal kidney, lung and liver, and in adult testis and liver. Also expressed in peripheral blood leukocytes, colon and small intestine, ovary, prostate, thymus, spleen, pancreas, kidney, lung, placenta and heart.

The protein localises to the membrane. Functionally, receptor for the cytotoxic ligand TRAIL. Contains a truncated death domain and hence is not capable of inducing apoptosis but protects against TRAIL-mediated apoptosis. Reports are contradictory with regards to its ability to induce the NF-kappa-B pathway. According to PubMed:9382840, it cannot but according to PubMed:9430226, it can induce the NF-kappa-B pathway. The polypeptide is Tumor necrosis factor receptor superfamily member 10D (Homo sapiens (Human)).